A 238-amino-acid chain; its full sequence is Sugar fermentation stimulation protein homolog (238 aa).

Belongs to the SfsA family.

This Alteromonas mediterranea (strain DSM 17117 / CIP 110805 / LMG 28347 / Deep ecotype) protein is Sugar fermentation stimulation protein homolog.